A 344-amino-acid polypeptide reads, in one-letter code: L-rhamnose-proton symporter (344 aa).

10 helical membrane-spanning segments follow: residues 4–24 (AITM…CFYA), 38–58 (WSVG…ALLL), 68–88 (FSLS…IGNI), 101–121 (MGIG…TPII), 137–157 (TLLG…AGQL), 175–195 (LVLA…MNAA), 214–234 (LPSY…FCFI), 259–279 (VLLS…YAWG), 290–310 (ISWM…GLVL), and 323–343 (VLSL…IGMA).

It belongs to the L-rhamnose transporter (TC 2.A.7.6) family.

The protein localises to the cell inner membrane. The catalysed reaction is L-rhamnopyranose(in) + H(+)(in) = L-rhamnopyranose(out) + H(+)(out). Uptake of L-rhamnose across the cytoplasmic membrane with the concomitant transport of protons into the cell (symport system). The sequence is that of L-rhamnose-proton symporter from Escherichia coli O9:H4 (strain HS).